Consider the following 317-residue polypeptide: Transcriptional regulator LsrR (317 aa).

The H-T-H motif DNA-binding region spans 33–56; the sequence is QSEISDRLGLTRLKVSRLLEKGHQ.

Belongs to the SorC transcriptional regulatory family.

It localises to the cytoplasm. Its activity is regulated as follows. Inactivated by phosphorylated autoinducer-2 (phospho-AI-2). Phospho-AI-2 acts by binding to LsrR, which is then unable to bind to the promoter regions, allowing the transcription of the target genes. Its function is as follows. Transcriptional regulator that represses the expression of the lsr operon in the absence of the quorum-sensing signaling molecule autoinducer 2 (AI-2). It also represses the expression of the lsrRK operon. Acts by binding directly to the lsrA and lsrR promoter regions. In the presence of phosphorylated autoinducer-2 (phospho-AI-2), LsrR is inactivated, leading to the transcription of the genes. The sequence is that of Transcriptional regulator LsrR (lsrR) from Escherichia coli (strain K12 / DH10B).